The following is a 172-amino-acid chain: 2S seed storage-like protein (172 aa).

The N-terminal stretch at 1–35 is a signal peptide; sequence MGVFSPSTTRLTLKWFSLSVALFLLFHWGIPSVDG. Residues 108–172 form a disordered region; it reads FMDSDSQEDA…RYSMTGSSFK (65 aa). Positions 151-160 are enriched in basic and acidic residues; it reads EPPRRCDIQR.

Belongs to the 2S seed storage albumins family.

This Picea glauca (White spruce) protein is 2S seed storage-like protein.